A 248-amino-acid chain; its full sequence is Probable transcriptional regulatory protein PFL_4766 (248 aa).

Belongs to the TACO1 family.

The protein localises to the cytoplasm. The polypeptide is Probable transcriptional regulatory protein PFL_4766 (Pseudomonas fluorescens (strain ATCC BAA-477 / NRRL B-23932 / Pf-5)).